Reading from the N-terminus, the 341-residue chain is Beta-hexosaminidase (341 aa).

Substrate-binding positions include aspartate 61, arginine 69, arginine 134, and 164–165; that span reads KH. The active-site Proton donor/acceptor is histidine 177. Catalysis depends on aspartate 249, which acts as the Nucleophile.

Belongs to the glycosyl hydrolase 3 family. NagZ subfamily.

It localises to the cytoplasm. The enzyme catalyses Hydrolysis of terminal non-reducing N-acetyl-D-hexosamine residues in N-acetyl-beta-D-hexosaminides.. The protein operates within cell wall biogenesis; peptidoglycan recycling. In terms of biological role, plays a role in peptidoglycan recycling by cleaving the terminal beta-1,4-linked N-acetylglucosamine (GlcNAc) from peptide-linked peptidoglycan fragments, giving rise to free GlcNAc, anhydro-N-acetylmuramic acid and anhydro-N-acetylmuramic acid-linked peptides. The protein is Beta-hexosaminidase of Shewanella frigidimarina (strain NCIMB 400).